Reading from the N-terminus, the 185-residue chain is MPDRAADGRDGPPGGSAAPEDLYARARAICLRLLTRAPRTRAQLTDALRRREIPDEVIEAVLDRFGEVGIVDDAVFAEAWVDSRHAGRGLARRALAAELRQRGVDEDTVRAAVDGLSPAQEEATARQLVRRRLAATRGKPTEVRVRRLMGMLARRGYSAGLAYRLVREELEAEGVEVDFPSPEEG.

It belongs to the RecX family.

The protein resides in the cytoplasm. Its function is as follows. Modulates RecA activity. In Thermobifida fusca (strain YX), this protein is Regulatory protein RecX.